We begin with the raw amino-acid sequence, 435 residues long: MTTFSPREIVSELDRYIIGQHEAKRAVAIALRNRWRRQQLDPSLRDEVMPKNILMIGPTGVGKTEISRRLAKLAGAPFIKVEATKFTEVGYVGRDVEQIIRDLVEVGIGLVREKKRAEVQAKAHVSAEERVLDALVGTTASPATRENFRKKLRDGELDDKEIDIEVADTGSGMGGFEIPGMPGANIGVLNLSEMFGKAMGGRTKKVRTTVKASYTDLIRDESDKLIDNEVIQREAVRSTENDGIVFLDEIDKIAARDGGMGAGVSREGVQRDLLPLVEGTTVSTKYGPVKTDHILFIASGAFHVSKPSDLLPELQGRLPIRVELRPLNKEDFRRILTETEASLIRQYRALMETESLSLDFTEDAIDALADVAVHLNSSVENIGARRLQTVMERVLDDISYNAPDRSGTAITIDAAYVREHVGDLAQNTDLSRFIL.

ATP contacts are provided by residues Ile18, 60 to 65 (GVGKTE), Asp248, Glu313, and Arg385.

Belongs to the ClpX chaperone family. HslU subfamily. In terms of assembly, a double ring-shaped homohexamer of HslV is capped on each side by a ring-shaped HslU homohexamer. The assembly of the HslU/HslV complex is dependent on binding of ATP.

The protein resides in the cytoplasm. ATPase subunit of a proteasome-like degradation complex; this subunit has chaperone activity. The binding of ATP and its subsequent hydrolysis by HslU are essential for unfolding of protein substrates subsequently hydrolyzed by HslV. HslU recognizes the N-terminal part of its protein substrates and unfolds these before they are guided to HslV for hydrolysis. The polypeptide is ATP-dependent protease ATPase subunit HslU (Rhizobium etli (strain CIAT 652)).